The chain runs to 244 residues: Large ribosomal subunit protein uL30w (244 aa).

Belongs to the universal ribosomal protein uL30 family.

This chain is Large ribosomal subunit protein uL30w (RPL7D), found in Arabidopsis thaliana (Mouse-ear cress).